Here is a 138-residue protein sequence, read N- to C-terminus: Glutaredoxin-C7 (138 aa).

The disordered stretch occupies residues 17–40 (SSTRGGGGGGMLGLTLFDPPGGEQ). In terms of domain architecture, Glutaredoxin spans 42-137 (AERIGRLVRE…PRLREVGALC (96 aa)). An intrachain disulfide couples Cys-62 to Cys-65.

The protein belongs to the glutaredoxin family. CC-type subfamily.

It is found in the cytoplasm. Functionally, has a glutathione-disulfide oxidoreductase activity in the presence of NADPH and glutathione reductase. Reduces low molecular weight disulfides and proteins. This chain is Glutaredoxin-C7 (GRXC7), found in Oryza sativa subsp. japonica (Rice).